We begin with the raw amino-acid sequence, 425 residues long: Inositol hexakisphosphate kinase 2 (425 aa).

ATP contacts are provided by residues 206-208 (ENL) and D219. Residues 215–223 (PCVLDLKMG), K221, and 235–242 (KAANQIRK) contribute to the substrate site. D382 is a binding site for ATP. Substrate is bound at residue H385.

It belongs to the inositol phosphokinase (IPK) family. In terms of tissue distribution, detected in kidney, intestine, liver and heart.

It is found in the nucleus. It carries out the reaction 1D-myo-inositol hexakisphosphate + ATP = 5-diphospho-1D-myo-inositol 1,2,3,4,6-pentakisphosphate + ADP. It functions in the pathway phospholipid metabolism; phosphatidylinositol metabolism. Functionally, converts inositol hexakisphosphate (InsP6) to diphosphoinositol pentakisphosphate (InsP7/PP-InsP5). This is Inositol hexakisphosphate kinase 2 (IP6K2) from Oryctolagus cuniculus (Rabbit).